The following is a 674-amino-acid chain: Pannexin-2 (674 aa).

Over M11–V53 the chain is Cytoplasmic. Residues V54–F74 traverse the membrane as a helical segment. Topologically, residues A75–P125 are extracellular. N86 carries an N-linked (GlcNAc...) asparagine glycan. The chain crosses the membrane as a helical span at residues Y126–A146. Topologically, residues S147–R230 are cytoplasmic. Residues H231–T251 traverse the membrane as a helical segment. Residues Q252–D295 are Extracellular-facing. Residues I296–F316 form a helical membrane-spanning segment. The Cytoplasmic segment spans residues R317 to F674. A compositionally biased stretch (polar residues) spans T394–P408. Disordered regions lie at residues T394 to R426 and A485 to T510. 2 positions are modified to phosphoserine: S590 and S601.

It belongs to the pannexin family. As to quaternary structure, forms PANX1/PANX2-heteromeric intercellular channels on coexpression in paired Xenopus oocytes. Does not form homomeric channels. S-palmitoylated in neural stem and progenitor cells. In terms of processing, cleaved by CASP3 and CASP7 during apoptosis. Cleavage has no effect on it function. Expressed in the eye, thyroid, prostate, kidney and liver. Abundantly expressed in the CNS, including hippocampus, olfactory bulb, cortex, cerebellum. Not detected in the white matter.

Its subcellular location is the cell membrane. The protein resides in the golgi apparatus membrane. It is found in the endoplasmic reticulum membrane. In terms of biological role, structural component of the gap junctions and the hemichannels. This is Pannexin-2 (Panx2) from Rattus norvegicus (Rat).